The sequence spans 126 residues: Fumarate reductase subunit C (126 aa).

3 consecutive transmembrane segments (helical) span residues 30-50, 64-84, and 105-125; these read IFVA…GAGG, VVVV…VTWF, and VLAG…WMVL.

This sequence belongs to the FrdC family. As to quaternary structure, part of an enzyme complex containing four subunits: a flavoprotein (FrdA), an iron-sulfur protein (FrdB), and two hydrophobic anchor proteins (FrdC and FrdD).

The protein localises to the cell membrane. Functionally, anchors the catalytic components of the fumarate reductase complex to the cell membrane, binds quinones. This chain is Fumarate reductase subunit C, found in Mycobacterium tuberculosis (strain CDC 1551 / Oshkosh).